The primary structure comprises 386 residues: Succinyl-diaminopimelate desuccinylase (386 aa).

His-77 is a binding site for Zn(2+). Asp-79 is a catalytic residue. Asp-110 lines the Zn(2+) pocket. Residue Glu-144 is the Proton acceptor of the active site. 3 residues coordinate Zn(2+): Glu-145, Glu-173, and His-359.

The protein belongs to the peptidase M20A family. DapE subfamily. In terms of assembly, homodimer. The cofactor is Zn(2+). It depends on Co(2+) as a cofactor.

The enzyme catalyses N-succinyl-(2S,6S)-2,6-diaminopimelate + H2O = (2S,6S)-2,6-diaminopimelate + succinate. It participates in amino-acid biosynthesis; L-lysine biosynthesis via DAP pathway; LL-2,6-diaminopimelate from (S)-tetrahydrodipicolinate (succinylase route): step 3/3. Its function is as follows. Catalyzes the hydrolysis of N-succinyl-L,L-diaminopimelic acid (SDAP), forming succinate and LL-2,6-diaminopimelate (DAP), an intermediate involved in the bacterial biosynthesis of lysine and meso-diaminopimelic acid, an essential component of bacterial cell walls. This is Succinyl-diaminopimelate desuccinylase from Methylibium petroleiphilum (strain ATCC BAA-1232 / LMG 22953 / PM1).